Reading from the N-terminus, the 56-residue chain is Large ribosomal subunit protein bL33c (56 aa).

Belongs to the bacterial ribosomal protein bL33 family.

The protein localises to the plastid. It is found in the chloroplast. The protein is Large ribosomal subunit protein bL33c of Rhodomonas salina (Cryptomonas salina).